Here is a 193-residue protein sequence, read N- to C-terminus: Ribonuclease HII (193 aa).

Residues 15 to 193 (YIVAGVDEAG…SYHRKSFKFC (179 aa)) form the RNase H type-2 domain. Positions 21, 22, and 112 each coordinate a divalent metal cation.

The protein belongs to the RNase HII family. The cofactor is Mn(2+). Mg(2+) serves as cofactor.

The protein localises to the cytoplasm. The enzyme catalyses Endonucleolytic cleavage to 5'-phosphomonoester.. Endonuclease that specifically degrades the RNA of RNA-DNA hybrids. The polypeptide is Ribonuclease HII (Rickettsia typhi (strain ATCC VR-144 / Wilmington)).